The primary structure comprises 203 residues: MSRYTGPRLKIIRRFGGLDLPGLTRKRPKNTNPPGMHGAERKKKSEYAIRLEEKQKVRFNYGLSERQMIRYMRKARRSKGSTGLALLQMLEMRLDCIVFRLGMAPTIPAARQLVSHGHIEVNGQKVTIPSYGCKVGDVITVKNKESSRKLVAAYAEYPGLFLPDYLEFDKEKLRGRIKELPPREQICAPVNELLVVEFYSRKL.

The interval 20–44 (LPGLTRKRPKNTNPPGMHGAERKKK) is disordered. The S4 RNA-binding domain occupies 92 to 155 (MRLDCIVFRL…SSRKLVAAYA (64 aa)).

It belongs to the universal ribosomal protein uS4 family. Part of the 30S ribosomal subunit. Contacts protein S5. The interaction surface between S4 and S5 is involved in control of translational fidelity.

In terms of biological role, one of the primary rRNA binding proteins, it binds directly to 16S rRNA where it nucleates assembly of the body of the 30S subunit. Its function is as follows. With S5 and S12 plays an important role in translational accuracy. This chain is Small ribosomal subunit protein uS4, found in Synechococcus sp. (strain JA-2-3B'a(2-13)) (Cyanobacteria bacterium Yellowstone B-Prime).